The primary structure comprises 664 residues: UvrABC system protein B (664 aa).

The 146-residue stretch at 25–170 folds into the Helicase ATP-binding domain; it reads NSILLGNKYQ…FVGQRISIKE (146 aa). 38 to 45 contributes to the ATP binding site; the sequence is GVTGSGKT. The short motif at 91-114 is the Beta-hairpin element; that stretch reads YYDYYQPESYVPSKDLFIEKEATI. Residues 429–595 form the Helicase C-terminal domain; it reads QMEDLYIEIQ…TIVKKIQNIL (167 aa). In terms of domain architecture, UVR spans 622-657; sequence KKLIDKLKFELEEAVNDERFEDAIVLRDKIKELGSK.

The protein belongs to the UvrB family. In terms of assembly, forms a heterotetramer with UvrA during the search for lesions. Interacts with UvrC in an incision complex.

The protein resides in the cytoplasm. The UvrABC repair system catalyzes the recognition and processing of DNA lesions. A damage recognition complex composed of 2 UvrA and 2 UvrB subunits scans DNA for abnormalities. Upon binding of the UvrA(2)B(2) complex to a putative damaged site, the DNA wraps around one UvrB monomer. DNA wrap is dependent on ATP binding by UvrB and probably causes local melting of the DNA helix, facilitating insertion of UvrB beta-hairpin between the DNA strands. Then UvrB probes one DNA strand for the presence of a lesion. If a lesion is found the UvrA subunits dissociate and the UvrB-DNA preincision complex is formed. This complex is subsequently bound by UvrC and the second UvrB is released. If no lesion is found, the DNA wraps around the other UvrB subunit that will check the other stand for damage. This is UvrABC system protein B from Borreliella afzelii (strain PKo) (Borrelia afzelii).